We begin with the raw amino-acid sequence, 492 residues long: MAQKTLLIITDGIGYRKDSDYNAFFHAKKPTYDLMFKTLPYSLIDTHGLSVGLPKGQMGNSEVGHMCIGAGRVLYQDLVKISLSLQNDGLKNNTAFLSAIQKSSVVHLMGLMSDGGVHSHIEHFIALALECEKFHKKVYLHLITDGRDVAPKSALTYLEIMQNICNESIQIATMSGRFYAMDRDNRFERIKLAYNSLMGLTDPTPLSPSEYIQSQYDKNITDEFIMPTCFKNYCGMQDDESFIFINFRNDRAREITSALGQKEFNGFKRQVFKKLHIATMTPYDKNFPYPILFPKESIQNTLAEVVSECNLTQSHIAETEKYAHVTFFINGGVETPFKNENRVLIQSPKVTTYDLKPEMSAKEVTLAVLEQMRLGTDLIIVNFANGDMVGHTGNFEASVKAVEAVDTSLGEILSLAKELNYAMLLTSDHGNCEHMKDENQNPLTNHTAGSVYCFVLGNGIKSIKNGALNNIASSVLKLMGIKAPATMDEPLF.

Mn(2+) contacts are provided by Asp11 and Ser61. The Phosphoserine intermediate role is filled by Ser61. Substrate is bound by residues His118, Arg147 to Asp148, Arg177, Arg183, Arg248 to Arg251, and Lys321. Mn(2+) is bound by residues Asp387, His391, Asp428, His429, and His446.

It belongs to the BPG-independent phosphoglycerate mutase family. As to quaternary structure, monomer. Requires Mn(2+) as cofactor.

The enzyme catalyses (2R)-2-phosphoglycerate = (2R)-3-phosphoglycerate. It functions in the pathway carbohydrate degradation; glycolysis; pyruvate from D-glyceraldehyde 3-phosphate: step 3/5. In terms of biological role, catalyzes the interconversion of 2-phosphoglycerate and 3-phosphoglycerate. This chain is 2,3-bisphosphoglycerate-independent phosphoglycerate mutase, found in Helicobacter acinonychis (strain Sheeba).